A 320-amino-acid chain; its full sequence is ADP/ATP translocase 4 (320 aa).

At 1–20 (MSNESSKKQSSKKALFDPVS) the chain is on the mitochondrial intermembrane side. One copy of the Solcar 1 repeat lies at 19 to 111 (VSFSKDLLAG…FAFKDKYKEL (93 aa)). The chain crosses the membrane as a helical span at residues 21-50 (FSKDLLAGGVAAAVSKTAVAPIERVKLLLQ). At 51 to 87 (VQASSKQISPEARYKGMLDCLVRIPREQGFLSYWRGN) the chain is on the mitochondrial matrix side. Residues 88–112 (LANVIRYFPTQALNFAFKDKYKELF) traverse the membrane as a helical segment. Arginine 93 and lysine 105 together coordinate ADP. Residues 113–122 (MSGVNKEKQF) are Mitochondrial intermembrane-facing. The helical transmembrane segment at 123–143 (WRWFLANLASGGAAGATSLCV) threads the bilayer. Solcar repeat units follow at residues 124–214 (RWFL…VKGL) and 221–308 (TPFL…IKEF). The Mitochondrial matrix portion of the chain corresponds to 144–191 (VYPLDFARTRLGVDIGKGPEQRQFTGLGDCIMKIAKSDGLIGLYQGFG). Residues 192 to 212 (VSVQGIIVYRASYFGAYDTVK) traverse the membrane as a helical segment. The Mitochondrial intermembrane portion of the chain corresponds to 213–223 (GLLPKPKETPF). Residues 224–244 (LVSFIIAQIVTTCSGILSYPF) traverse the membrane as a helical segment. Topologically, residues 245-284 (DTVRRRMMMQSGESDRQYKGTIDCFLKIYRHEGVPAFFRG) are mitochondrial matrix. Arginine 248 is a binding site for ADP. Residues 248 to 253 (RRRMMM) are important for transport activity. A Nucleotide carrier signature motif motif is present at residues 248 to 253 (RRRMMM). A helical transmembrane segment spans residues 285 to 302 (AFSNILRGTGGALVLVLY). Topologically, residues 303-320 (DKIKEFLNIDVGGSSSGD) are mitochondrial intermembrane.

It belongs to the mitochondrial carrier (TC 2.A.29) family. Monomer. Specifically expressed in undifferentiated embryonic stem cells and germ cells. Expression is down-regulated after embryonic stem cells differentiation. In adults, only expressed in developing gametes in testis. In testis, expressed at higher level in spermatocytes. Expression is probably associated with entry of the male germ cells into meiosis. Expressed at very low level in Sertoli cells.

It localises to the mitochondrion inner membrane. The protein localises to the membrane. The protein resides in the cell projection. It is found in the cilium. Its subcellular location is the flagellum membrane. The catalysed reaction is ADP(in) + ATP(out) = ADP(out) + ATP(in). It catalyses the reaction dATP(out) + ADP(in) = dATP(in) + ADP(out). The enzyme catalyses dADP(in) + ADP(out) = dADP(out) + ADP(in). It carries out the reaction H(+)(in) = H(+)(out). With respect to regulation, the matrix-open state (m-state) is inhibited by the membrane-permeable bongkrekic acid (BKA). The cytoplasmic-open state (c-state) is inhibited by the membrane-impermeable toxic inhibitor carboxyatractyloside (CATR). Proton transporter activity is inhibited by ADP:ATP antiporter activity. Its function is as follows. ADP:ATP antiporter that mediates import of ADP into the mitochondrial matrix for ATP synthesis, and export of ATP out to fuel the cell. Cycles between the cytoplasmic-open state (c-state) and the matrix-open state (m-state): operates by the alternating access mechanism with a single substrate-binding site intermittently exposed to either the cytosolic (c-state) or matrix (m-state) side of the inner mitochondrial membrane. Specifically required during spermatogenesis, probably to mediate ADP:ATP exchange in spermatocytes. Large ATP supplies from mitochondria may be critical for normal progression of spermatogenesis during early stages of meiotic prophase I, including DNA double-strand break repair and chromosomal synapsis. In addition to its ADP:ATP antiporter activity, also involved in mitochondrial uncoupling and mitochondrial permeability transition pore (mPTP) activity. Plays a role in mitochondrial uncoupling by acting as a proton transporter: proton transport uncouples the proton flows via the electron transport chain and ATP synthase to reduce the efficiency of ATP production and cause mitochondrial thermogenesis. Proton transporter activity is inhibited by ADP:ATP antiporter activity, suggesting that SLC25A31/ANT4 acts as a master regulator of mitochondrial energy output by maintaining a delicate balance between ATP production (ADP:ATP antiporter activity) and thermogenesis (proton transporter activity). Proton transporter activity requires free fatty acids as cofactor, but does not transport it. Among nucleotides, may also exchange ADP for dATP and dADP. Also plays a key role in mPTP opening, a non-specific pore that enables free passage of the mitochondrial membranes to solutes of up to 1.5 kDa, and which contributes to cell death. It is however unclear if SLC25A31/ANT4 constitutes a pore-forming component of mPTP or regulates it. This chain is ADP/ATP translocase 4, found in Mus musculus (Mouse).